Reading from the N-terminus, the 432-residue chain is Trigger factor (432 aa).

The region spanning Glu-161 to Pro-246 is the PPIase FKBP-type domain.

It belongs to the FKBP-type PPIase family. Tig subfamily. In terms of assembly, homodimer and monomer. In vivo most of the ribosomes are in complex with monomeric TF. Uncomplexed TF, however, is in a monomer-dimer equilibrium with approximately two thirds of TF existing in a dimeric state.

It is found in the cytoplasm. The catalysed reaction is [protein]-peptidylproline (omega=180) = [protein]-peptidylproline (omega=0). Functionally, involved in protein export. Acts as a chaperone by maintaining the newly synthesized protein in an open conformation. Functions as a peptidyl-prolyl cis-trans isomerase. The chain is Trigger factor from Shigella boydii serotype 4 (strain Sb227).